Reading from the N-terminus, the 204-residue chain is Pyridoxamine 5'-phosphate oxidase YLR456W homolog (204 aa).

FMN is bound by residues 65–66 (FT) and Asn-127.

Belongs to the pyridoxamine 5'-phosphate oxidase family. FMN is required as a cofactor.

The protein localises to the cytoplasm. It localises to the nucleus. The chain is Pyridoxamine 5'-phosphate oxidase YLR456W homolog from Saccharomyces cerevisiae (strain ATCC 204508 / S288c) (Baker's yeast).